Here is a 135-residue protein sequence, read N- to C-terminus: uncharacterized protein (135 aa).

The segment at 1–36 is disordered; the sequence is MSHAEKPMSDSVNHHHHRTFEVLTAEPVRSRRKPRH.

Belongs to the transposase 8 family.

This is an uncharacterized protein from Sinorhizobium fredii (strain NBRC 101917 / NGR234).